A 264-amino-acid polypeptide reads, in one-letter code: NADH dehydrogenase [ubiquinone] iron-sulfur protein 3, mitochondrial (264 aa).

The N-terminal 36 residues, 1–36 (MAAAAVARLWWRGILGASALTRGTGRPSVLLLPVRR), are a transit peptide targeting the mitochondrion.

This sequence belongs to the complex I 30 kDa subunit family. Core subunit of respiratory chain NADH dehydrogenase (Complex I) which is composed of 45 different subunits. Interacts with NDUFAF3. Interacts with RAB5IF. Found in subcomplexes containing subunits NDUFS2, MT-ND1 and NDUFA13.

Its subcellular location is the mitochondrion inner membrane. The enzyme catalyses a ubiquinone + NADH + 5 H(+)(in) = a ubiquinol + NAD(+) + 4 H(+)(out). Core subunit of the mitochondrial membrane respiratory chain NADH dehydrogenase (Complex I) which catalyzes electron transfer from NADH through the respiratory chain, using ubiquinone as an electron acceptor. Essential for the catalytic activity and assembly of complex I. The polypeptide is NADH dehydrogenase [ubiquinone] iron-sulfur protein 3, mitochondrial (NDUFS3) (Pan troglodytes (Chimpanzee)).